Consider the following 156-residue polypeptide: MDCAITKDVEDMLRKFDSNGDGNITFDEAVKRLKETGSKDPLRAASSMFISLDKDKDGIISIKEIHGHKADVAAKKLQKAINNICNNFLKGYDTDKDGRISWDEVCNWVNKNNPDAIAPLMIVENFFSELDKDNDRFVTKCELQEYVTKYKSLPEQ.

EF-hand domains lie at 4–39 (AITK…TGSK), 40–75 (DPLR…VAAK), 80–115 (AINN…NNPD), and 118–153 (APLM…YKSL). Ca(2+) contacts are provided by Asp17, Asn19, Asp21, Asn23, Glu28, Asp53, Asp55, Asp57, Glu64, Asp93, Asp95, Asp97, Arg99, Glu104, Asp131, Asp133, Asp135, and Glu142.

This chain is Calcium-binding protein A (cbpA), found in Dictyostelium discoideum (Social amoeba).